The following is a 349-amino-acid chain: tRNA pseudouridine synthase D (349 aa).

Residue phenylalanine 27 participates in substrate binding. The active-site Nucleophile is aspartate 80. Asparagine 129 is a binding site for substrate. The region spanning 155-303 is the TRUD domain; that stretch reads GVPNYFGAQR…VEASRRAMLL (149 aa). Residue phenylalanine 329 participates in substrate binding.

Belongs to the pseudouridine synthase TruD family.

It carries out the reaction uridine(13) in tRNA = pseudouridine(13) in tRNA. Its function is as follows. Responsible for synthesis of pseudouridine from uracil-13 in transfer RNAs. The chain is tRNA pseudouridine synthase D from Salmonella typhi.